The primary structure comprises 317 residues: MIVVTGAAGFIGSNLVKQLNAMGRNDIIAVDDLTDGTQMFNLADCEIADYLDKDDFIKQIKAGDFDNKLEVIFHQGACSSTTEWDGKFMMANNFEYSKTLLHYSQANNCQFIYASSASVYGGSEKFIEQRELEKPLNVYAYSKFLFDQYVRQQKLTGQVAGLRYFNVYGPREQHKGGMASVAFHFNNQINTNGVCRLFEGVDGYENGQQLRDFVFVEDVVKVNLWLWQNPSVSGIYNCGTGQAQSFNDVANAVIAYHGKGHIEYIPFPDKLKGAYQSYTQADLTQLRAAGYQGEFKTVEQAVPEYLDWLKTQHFIGQ.

NADP(+)-binding positions include 10–11 (FI), 31–32 (DD), Gln-38, Lys-53, 75–79 (QGACS), and Asn-92. The active-site Proton acceptor is Tyr-139. Lys-143 provides a ligand contact to NADP(+). Asn-166 is a binding site for substrate. NADP(+)-binding residues include Val-167 and Lys-175. Lys-175 (proton acceptor) is an active-site residue. Substrate-binding positions include Gly-177, His-184, 198-201 (FEGV), Arg-211, and Tyr-275.

The protein belongs to the NAD(P)-dependent epimerase/dehydratase family. HldD subfamily. In terms of assembly, homopentamer. The cofactor is NADP(+).

The catalysed reaction is ADP-D-glycero-beta-D-manno-heptose = ADP-L-glycero-beta-D-manno-heptose. It functions in the pathway nucleotide-sugar biosynthesis; ADP-L-glycero-beta-D-manno-heptose biosynthesis; ADP-L-glycero-beta-D-manno-heptose from D-glycero-beta-D-manno-heptose 7-phosphate: step 4/4. Functionally, catalyzes the interconversion between ADP-D-glycero-beta-D-manno-heptose and ADP-L-glycero-beta-D-manno-heptose via an epimerization at carbon 6 of the heptose. This Shewanella frigidimarina (strain NCIMB 400) protein is ADP-L-glycero-D-manno-heptose-6-epimerase.